The sequence spans 121 residues: Large ribosomal subunit protein bL12 (121 aa).

The protein belongs to the bacterial ribosomal protein bL12 family. In terms of assembly, homodimer. Part of the ribosomal stalk of the 50S ribosomal subunit. Forms a multimeric L10(L12)X complex, where L10 forms an elongated spine to which 2 to 4 L12 dimers bind in a sequential fashion. Binds GTP-bound translation factors.

Functionally, forms part of the ribosomal stalk which helps the ribosome interact with GTP-bound translation factors. Is thus essential for accurate translation. The sequence is that of Large ribosomal subunit protein bL12 from Xanthomonas euvesicatoria pv. vesicatoria (strain 85-10) (Xanthomonas campestris pv. vesicatoria).